A 77-amino-acid polypeptide reads, in one-letter code: UPF0154 protein LCK_00994 (77 aa).

The chain crosses the membrane as a helical span at residues 5–25 (FGILIFVLGLVIGLVIGFFVA). The segment at 50–77 (SMGQKPSQKKLNQMMAQMKQQSEQSQKK) is disordered.

The protein belongs to the UPF0154 family.

Its subcellular location is the cell membrane. The sequence is that of UPF0154 protein LCK_00994 from Leuconostoc citreum (strain KM20).